Consider the following 378-residue polypeptide: Glutamate 5-kinase 1 (378 aa).

Residue lysine 13 participates in ATP binding. The substrate site is built by serine 53, aspartate 140, and asparagine 152. ATP is bound at residue 172-173; that stretch reads SD. Residues 278–355 enclose the PUA domain; it reads AGRLTVDAGA…AEIETVLGYE (78 aa).

The protein belongs to the glutamate 5-kinase family.

The protein resides in the cytoplasm. It catalyses the reaction L-glutamate + ATP = L-glutamyl 5-phosphate + ADP. It functions in the pathway amino-acid biosynthesis; L-proline biosynthesis; L-glutamate 5-semialdehyde from L-glutamate: step 1/2. Catalyzes the transfer of a phosphate group to glutamate to form L-glutamate 5-phosphate. In Mesorhizobium japonicum (strain LMG 29417 / CECT 9101 / MAFF 303099) (Mesorhizobium loti (strain MAFF 303099)), this protein is Glutamate 5-kinase 1.